The sequence spans 54 residues: VILLLITSTPSVDARLKAKDNMPLASFHDNAKRTLQTRLINTRCCPGKPCCRIG.

The signal sequence occupies residues 1–14 (VILLLITSTPSVDA). A propeptide spanning residues 15-42 (RLKAKDNMPLASFHDNAKRTLQTRLINT) is cleaved from the precursor. 4-hydroxyproline is present on Pro-49. Position 53 is an isoleucine amide (Ile-53).

The protein belongs to the conotoxin T superfamily. Contains 2 disulfide bonds that can be either 'C1-C3, C2-C4' or 'C1-C4, C2-C3', since these disulfide connectivities have been observed for conotoxins with cysteine framework V (for examples, see AC P0DQQ7 and AC P81755). Expressed by the venom duct.

The protein localises to the secreted. The chain is Conotoxin vc5a from Conus victoriae (Queen Victoria cone).